The sequence spans 875 residues: Alanine--tRNA ligase (875 aa).

Zn(2+) is bound by residues histidine 564, histidine 568, cysteine 666, and histidine 670.

Belongs to the class-II aminoacyl-tRNA synthetase family. Homotetramer. Zn(2+) serves as cofactor.

The protein localises to the cytoplasm. It carries out the reaction tRNA(Ala) + L-alanine + ATP = L-alanyl-tRNA(Ala) + AMP + diphosphate. Functionally, catalyzes the attachment of alanine to tRNA(Ala) in a two-step reaction: alanine is first activated by ATP to form Ala-AMP and then transferred to the acceptor end of tRNA(Ala). Also edits incorrectly charged Ser-tRNA(Ala) and Gly-tRNA(Ala) via its editing domain. The polypeptide is Alanine--tRNA ligase (Pectobacterium atrosepticum (strain SCRI 1043 / ATCC BAA-672) (Erwinia carotovora subsp. atroseptica)).